Here is a 328-residue protein sequence, read N- to C-terminus: Embigin (328 aa).

The first 33 residues, 1–33 (MRSHTGLRALVAPGCSLLLLYLLAATRPDRAVG), serve as a signal peptide directing secretion. The Extracellular portion of the chain corresponds to 34–264 (DPADSAFTSL…VLSFMVPLKP (231 aa)). Asn55, Asn62, Asn75, Asn100, Asn117, Asn189, Asn196, Asn214, and Asn219 each carry an N-linked (GlcNAc...) asparagine glycan. Ig-like domains follow at residues 67-160 (EQTR…RVPK) and 159-254 (PKVH…IKLV). 2 cysteine pairs are disulfide-bonded: Cys88/Cys144 and Cys180/Cys238. The chain crosses the membrane as a helical span at residues 265 to 285 (FLAIIAEVILLVAIILLCEVY). Residues 286–328 (TQKKKNDPDDGKEFEQIEQLKSDDSNGIENNVPRYRKTDSGDQ) are Cytoplasmic-facing. Basic and acidic residues predominate over residues 289 to 309 (KKNDPDDGKEFEQIEQLKSDD). The tract at residues 289–328 (KKNDPDDGKEFEQIEQLKSDDSNGIENNVPRYRKTDSGDQ) is disordered. Ser310 carries the phosphoserine modification.

In terms of assembly, interacts with SLC16A1, SLC16A6 and SLC16A7. Post-translationally, N-glycosylated. As to expression, detected in prostate, mammary gland and erythrocytes (at protein level). Detected in testis, brain, prostate, heart, kidney, liver, mammary gland and lung.

Its subcellular location is the cell membrane. The protein resides in the synapse. In terms of biological role, plays a role in the outgrowth of motoneurons and in the formation of neuromuscular junctions. Following muscle denervation, promotes nerve terminal sprouting and the formation of additional acetylcholine receptor clusters at synaptic sites without affecting terminal Schwann cell number or morphology. Delays the retraction of terminal sprouts following re-innervation of denervated endplates. Plays a role in targeting the monocarboxylate transporters SLC16A1, SLC16A6 and SLC16A7 to the cell membrane. This chain is Embigin (Emb), found in Rattus norvegicus (Rat).